The sequence spans 375 residues: Histidine biosynthesis bifunctional protein HisB (375 aa).

Residues 1–168 form a histidinol-phosphatase region; that stretch reads MTPIVFIDRD…GIAHTLADAP (168 aa). Catalysis depends on D8, which acts as the Nucleophile. Positions 8, 10, and 128 each coordinate Mg(2+). The active-site Proton donor is the D10. The imidazoleglycerol-phosphate dehydratase stretch occupies residues 169-375; that stretch reads RRAVVQRHTK…HVLPSTKGAL (207 aa).

The protein in the N-terminal section; belongs to the histidinol-phosphatase family. It in the C-terminal section; belongs to the imidazoleglycerol-phosphate dehydratase family. It depends on Mg(2+) as a cofactor.

The protein resides in the cytoplasm. It catalyses the reaction D-erythro-1-(imidazol-4-yl)glycerol 3-phosphate = 3-(imidazol-4-yl)-2-oxopropyl phosphate + H2O. The catalysed reaction is L-histidinol phosphate + H2O = L-histidinol + phosphate. It participates in amino-acid biosynthesis; L-histidine biosynthesis; L-histidine from 5-phospho-alpha-D-ribose 1-diphosphate: step 6/9. Its pathway is amino-acid biosynthesis; L-histidine biosynthesis; L-histidine from 5-phospho-alpha-D-ribose 1-diphosphate: step 8/9. This is Histidine biosynthesis bifunctional protein HisB from Xylella fastidiosa (strain Temecula1 / ATCC 700964).